The sequence spans 634 residues: Ankyrin repeat and SOCS box protein 2 (634 aa).

The UIM domain occupies 26 to 45 (SEEELLQMAIEQSLADKTRG). The disordered stretch occupies residues 36–82 (EQSLADKTRGPTPAEASASSQTNHQPGHFHPWTRSPSSPENPPARAP). ANK repeat units lie at residues 104-133 (AAMD…NLAE), 137-167 (EGWL…TIDQ), 171-200 (QEET…EPDI), 204-233 (SRET…DANH), 237-266 (RGWT…KVEA), 270-299 (YSIT…DINT), 303-332 (DSAS…DANK), 336-365 (DGLL…RTRV), 368-397 (SGIS…DVNA), 410-439 (RRSS…DPNR), 440-469 (DVIS…NIDA), and 476-504 (TAFP…DGEP). Ser371 is modified (phosphoserine). The SOCS box domain maps to 580–634 (EDWAVIKEKAEPPRPLAHLCRLRVRKAIGKYRIKLLDTLPLPGRLIRYLKYENTQ).

This sequence belongs to the ankyrin SOCS box (ASB) family. In terms of assembly, component of a probable ECS E3 ubiquitin-protein ligase complex which contains CUL5, either RBX1 or RNF7/RBX2, Elongin BC complex (ELOB and ELOC) and ASB2. Interacts with SKP2. Through its interaction with SKP2, likely to bridge the formation of dimeric E3-ubiquitin-protein ligase complexes composed of an ECS complex and an SCF(SKP2) complex. Interacts with JAK2; the interaction targets JAK2 for Notch-mediated proteasomal degradation. Interacts with TCF3/E2A; the interaction is mediated by SKP2 and targets TCF3 for Notch-mediated proteasomal degradation. Interacts with DES. Post-translationally, monoubiquitinated. In terms of processing, not monoubiquitinated. Phosphorylation at Ser-371 is required for association with FLNA and subsequent FLNA degradation. In terms of tissue distribution, highest expression in muscle, heart and spleen. Highly expressed in cells of the first and second heart fields in the developing embryonic heart. At 9.5 dpc, robust expression predominantly in the left and right ventricles (RV) and to a lower extent in inflow and outflow tracts. At 10.5 and 11.5 dpc, expression is restricted to the myocardium with no expression observed in the endocardium. As to expression, not expressed in immature dendritic cells. Highly expressed in adult skeletal muscle with very low levels in adult bone marrow. Expressed in immature dendritic cells and in primary dendritic cells derived from the spleen. Highly expressed in adult bone marrow with negligible levels in adult skeletal muscle. Expressed at higher levels in T helper type 2 (Th2) cells than in regulatory T (Treg) cells, type 1 helper T (Th1) cells and T helper 17 (Th17) cells.

It is found in the cytoplasm. The protein resides in the cytoskeleton. Its subcellular location is the stress fiber. The protein localises to the myofibril. It localises to the sarcomere. It is found in the z line. The protein operates within protein modification; protein ubiquitination. Substrate-recognition component of a SCF-like ECS (Elongin-Cullin-SOCS-box protein) E3 ubiquitin-protein ligase complex which mediates the ubiquitination and subsequent proteasomal degradation of target proteins. Mediates Notch-induced ubiquitination and degradation of substrates including TCF3/E2A and JAK2. Required during embryonic heart development for complete heart looping. Required for cardiomyocyte differentiation. Specifically promotes the ubiquitination of SMAD9 and targets it for proteasomal degradation, leading to avoid excessive accumulation of SMAD9. Plays a role in the regulation of NK-cell migration by modulating protein levels of filamin A/FLNA via regulation of its ubiquitination and proteasome degradation. In terms of biological role, involved in myogenic differentiation and targets filamin FLNB for proteasomal degradation but not filamin FLNA. Also targets DES for proteasomal degradation. Acts as a negative regulator of skeletal muscle mass. Its function is as follows. Targets filamins FLNA and FLNB for proteasomal degradation. This leads to enhanced adhesion of hematopoietic cells to fibronectin. Required for FLNA degradation in immature cardiomyocytes which is necessary for actin cytoskeleton remodeling, leading to proper organization of myofibrils and function of mature cardiomyocytes. Required for degradation of FLNA and FLNB in immature dendritic cells (DC) which enhances immature DC migration by promoting DC podosome formation and DC-mediated degradation of the extracellular matrix. Does not promote proteasomal degradation of tyrosine-protein kinases JAK1 or JAK2 in hematopoietic cells. This is Ankyrin repeat and SOCS box protein 2 from Mus musculus (Mouse).